The sequence spans 647 residues: tRNA 5-methylaminomethyl-2-thiouridine biosynthesis bifunctional protein MnmC (647 aa).

Positions 1 to 227 (MLTWKNNLTP…KREMLIGSYS (227 aa)) are tRNA (mnm(5)s(2)U34)-methyltransferase. The FAD-dependent cmnm(5)s(2)U34 oxidoreductase stretch occupies residues 256 to 647 (VGAGIAGTTL…ARFLYRKVRK (392 aa)).

It in the N-terminal section; belongs to the methyltransferase superfamily. tRNA (mnm(5)s(2)U34)-methyltransferase family. In the C-terminal section; belongs to the DAO family. FAD is required as a cofactor.

The protein localises to the cytoplasm. The enzyme catalyses 5-aminomethyl-2-thiouridine(34) in tRNA + S-adenosyl-L-methionine = 5-methylaminomethyl-2-thiouridine(34) in tRNA + S-adenosyl-L-homocysteine + H(+). In terms of biological role, catalyzes the last two steps in the biosynthesis of 5-methylaminomethyl-2-thiouridine (mnm(5)s(2)U) at the wobble position (U34) in tRNA. Catalyzes the FAD-dependent demodification of cmnm(5)s(2)U34 to nm(5)s(2)U34, followed by the transfer of a methyl group from S-adenosyl-L-methionine to nm(5)s(2)U34, to form mnm(5)s(2)U34. The polypeptide is tRNA 5-methylaminomethyl-2-thiouridine biosynthesis bifunctional protein MnmC (Leptospira interrogans serogroup Icterohaemorrhagiae serovar copenhageni (strain Fiocruz L1-130)).